A 184-amino-acid polypeptide reads, in one-letter code: Photosystem I assembly protein Ycf4 (184 aa).

The next 2 membrane-spanning stretches (helical) occupy residues 19–39 and 57–77; these read ISNF…LLVG and IIFF…LFIS.

It belongs to the Ycf4 family.

The protein resides in the plastid. It localises to the chloroplast thylakoid membrane. In terms of biological role, seems to be required for the assembly of the photosystem I complex. In Cucumis sativus (Cucumber), this protein is Photosystem I assembly protein Ycf4.